The chain runs to 253 residues: Large ribosomal subunit protein uL1m (253 aa).

The transit peptide at 1 to 81 directs the protein to the mitochondrion; sequence MSSLIALGKR…SIALKSNRRA (81 aa).

The protein belongs to the universal ribosomal protein uL1 family. In terms of assembly, component of the mitochondrial large ribosomal subunit (mt-LSU). Mature yeast 74S mitochondrial ribosomes consist of a small (37S) and a large (54S) subunit. The 37S small subunit contains a 15S ribosomal RNA (15S mt-rRNA) and at least 32 different proteins. The 54S large subunit contains a 21S rRNA (21S mt-rRNA) and at least 45 different proteins.

It localises to the mitochondrion. In terms of biological role, component of the mitochondrial ribosome (mitoribosome), a dedicated translation machinery responsible for the synthesis of mitochondrial genome-encoded proteins, including at least some of the essential transmembrane subunits of the mitochondrial respiratory chain. The mitoribosomes are attached to the mitochondrial inner membrane and translation products are cotranslationally integrated into the membrane. This Schizosaccharomyces pombe (strain 972 / ATCC 24843) (Fission yeast) protein is Large ribosomal subunit protein uL1m (mrpl1).